The primary structure comprises 217 residues: ATP synthase subunit 4, mitochondrial (217 aa).

The N-terminal 14 residues, 1–14 (MPFARVGALSARHY), are a transit peptide targeting the mitochondrion. The next 2 helical transmembrane spans lie at 41-61 (GVLATGVLGSIYAISNELYIV) and 66-86 (IVLGVFAAFVVVVAKLGGPGY).

As to quaternary structure, F-type ATP synthases have 2 components, the catalytic core F(1) and the membrane-embedded component F(0), linked together by a central stalk and a peripheral stalk. The central stalk, also called rotor shaft, is often seen as part of F(1). The peripheral stalk is seen as part of F(0). F(0) contains the membrane channel next to the rotor. F-type ATP synthases form dimers but each monomer functions independently in ATP generation. The dimer consists of 17 different polypeptides: ATP1 (subunit alpha, 3 molecules per monomer, part of F(1)), ATP2 (subunit beta, 3 copies per monomer, part of F(1)), ATP3 (subunit gamma, part of the central stalk), ATP4 (subunit b, part of the peripheral stalk), ATP5/OSCP (subunit 5/OSCP, part of the peripheral stalk), ATP6 (subunit a, part of the peripheral stalk), ATP7 (subunit d, part of the peripheral stalk), ATP8 (subunit 8, part of the peripheral stalk), OLI1 (subunit c, part of the rotor, 10 molecules per monomer), ATP14 (subunit h, part of the peripheral stalk), ATP15 (subunit epsilon, part of the central stalk), ATP16 (subunit delta, part of the central stalk), ATP17 (subunit f, part of the peripheral stalk), ATP18 (subunit i/j, part of the peripheral stalk), ATP19 (subunit k, dimer-specific, at interface between monomers), ATP20 (subunit g, at interface between monomers), TIM11 (subunit e, at interface between monomers).

The protein resides in the mitochondrion inner membrane. In terms of biological role, mitochondrial membrane ATP synthase (F(1)F(0) ATP synthase or Complex V) produces ATP from ADP in the presence of a proton gradient across the membrane which is generated by electron transport complexes of the respiratory chain. F-type ATP synthases consist of two structural domains, F(1) - containing the extramembraneous catalytic core, and F(0) - containing the membrane proton channel, linked together by a central stalk and a peripheral stalk. During catalysis, ATP synthesis in the catalytic domain of F(1) is coupled via a rotary mechanism of the central stalk subunits to proton translocation. Part of the complex F(0) domain and the peripheral stalk, which acts as a stator to hold the catalytic alpha/ATP1(3)beta/ATP2(3) subcomplex and subunit a/ATP6 static relative to the rotary elements. This chain is ATP synthase subunit 4, mitochondrial, found in Yarrowia lipolytica (strain CLIB 122 / E 150) (Yeast).